Consider the following 275-residue polypeptide: Formamidopyrimidine-DNA glycosylase (275 aa).

P2 functions as the Schiff-base intermediate with DNA in the catalytic mechanism. The active-site Proton donor is E3. The active-site Proton donor; for beta-elimination activity is the K58. 3 residues coordinate DNA: H93, R111, and R156. The FPG-type zinc-finger motif lies at 241–275; the sequence is FVYDRAGQPCRVCGTPVRQIVQGQRSTYFCPTCQR. The Proton donor; for delta-elimination activity role is filled by R265.

This sequence belongs to the FPG family. As to quaternary structure, monomer. It depends on Zn(2+) as a cofactor.

The catalysed reaction is Hydrolysis of DNA containing ring-opened 7-methylguanine residues, releasing 2,6-diamino-4-hydroxy-5-(N-methyl)formamidopyrimidine.. The enzyme catalyses 2'-deoxyribonucleotide-(2'-deoxyribose 5'-phosphate)-2'-deoxyribonucleotide-DNA = a 3'-end 2'-deoxyribonucleotide-(2,3-dehydro-2,3-deoxyribose 5'-phosphate)-DNA + a 5'-end 5'-phospho-2'-deoxyribonucleoside-DNA + H(+). In terms of biological role, involved in base excision repair of DNA damaged by oxidation or by mutagenic agents. Acts as a DNA glycosylase that recognizes and removes damaged bases. Has a preference for oxidized purines, such as 7,8-dihydro-8-oxoguanine (8-oxoG). Has AP (apurinic/apyrimidinic) lyase activity and introduces nicks in the DNA strand. Cleaves the DNA backbone by beta-delta elimination to generate a single-strand break at the site of the removed base with both 3'- and 5'-phosphates. This chain is Formamidopyrimidine-DNA glycosylase, found in Burkholderia cenocepacia (strain HI2424).